A 188-amino-acid chain; its full sequence is Murein DD-endopeptidase MepS/Murein LD-carboxypeptidase (188 aa).

Positions 1 to 26 are cleaved as a signal peptide; that stretch reads MVKSQPILRYILRGIPAIAVAVLLSA. Cys27 carries the N-palmitoyl cysteine lipid modification. Cys27 carries the S-diacylglycerol cysteine lipid modification. The NlpC/P60 domain occupies 64 to 185; the sequence is VDVKSRIMDQ…KRYNEARRVL (122 aa). Cys94 acts as the Nucleophile in catalysis. Catalysis depends on His145, which acts as the Proton acceptor. Residue His157 is part of the active site.

Belongs to the peptidase C40 family. Monomer.

It localises to the cell outer membrane. The enzyme catalyses N-acetyl-D-glucosaminyl-N-acetylmuramoyl-L-alanyl-meso-2,6-diaminoheptanedioyl-D-alanine + H2O = N-acetyl-D-glucosaminyl-N-acetylmuramoyl-L-alanyl-meso-2,6-diaminoheptanedioate + D-alanine. It participates in cell wall biogenesis; cell wall polysaccharide biosynthesis. In terms of biological role, a murein DD-endopeptidase with specificity for D-Ala-meso-diaminopimelic acid (mDAP) cross-links. Its role is probably to cleave D-Ala-mDAP cross-links to allow insertion of new glycans and thus cell wall expansion. Functionally redundant with MepM and MepH. Also has weak LD-carboxypeptidase activity on L-mDAP-D-Ala peptide bonds. The protein is Murein DD-endopeptidase MepS/Murein LD-carboxypeptidase (mepS) of Escherichia coli O157:H7.